Consider the following 374-residue polypeptide: DNA replication and repair protein RecF (374 aa).

ATP is bound at residue 30 to 37 (GENAQGKT).

This sequence belongs to the RecF family.

The protein localises to the cytoplasm. Functionally, the RecF protein is involved in DNA metabolism; it is required for DNA replication and normal SOS inducibility. RecF binds preferentially to single-stranded, linear DNA. It also seems to bind ATP. In Pediococcus pentosaceus (strain ATCC 25745 / CCUG 21536 / LMG 10740 / 183-1w), this protein is DNA replication and repair protein RecF.